The primary structure comprises 322 residues: Acetyl-coenzyme A carboxylase carboxyl transferase subunit beta (322 aa).

Positions 24 to 293 (LWIKCPDTGQ…PAVEEIAASD (270 aa)) constitute a CoA carboxyltransferase N-terminal domain.

The protein belongs to the AccD/PCCB family. As to quaternary structure, acetyl-CoA carboxylase is a heterohexamer composed of biotin carboxyl carrier protein (AccB), biotin carboxylase (AccC) and two subunits each of ACCase subunit alpha (AccA) and ACCase subunit beta (AccD).

It localises to the cytoplasm. The enzyme catalyses N(6)-carboxybiotinyl-L-lysyl-[protein] + acetyl-CoA = N(6)-biotinyl-L-lysyl-[protein] + malonyl-CoA. Its pathway is lipid metabolism; malonyl-CoA biosynthesis; malonyl-CoA from acetyl-CoA: step 1/1. Component of the acetyl coenzyme A carboxylase (ACC) complex. Biotin carboxylase (BC) catalyzes the carboxylation of biotin on its carrier protein (BCCP) and then the CO(2) group is transferred by the transcarboxylase to acetyl-CoA to form malonyl-CoA. The polypeptide is Acetyl-coenzyme A carboxylase carboxyl transferase subunit beta (Rhodopseudomonas palustris (strain BisB5)).